The primary structure comprises 138 residues: Basic phospholipase A2 PL-X' (138 aa).

The first 16 residues, 1 to 16, serve as a signal peptide directing secretion; it reads MRTLWIMAVLLVGVEG. 7 cysteine pairs are disulfide-bonded: cysteine 42–cysteine 131, cysteine 44–cysteine 60, cysteine 59–cysteine 111, cysteine 65–cysteine 138, cysteine 66–cysteine 104, cysteine 73–cysteine 97, and cysteine 91–cysteine 102. Residues tyrosine 43, glycine 45, and glycine 47 each contribute to the Ca(2+) site. The active site involves histidine 63. Aspartate 64 provides a ligand contact to Ca(2+). Aspartate 105 is a catalytic residue.

It belongs to the phospholipase A2 family. Group II subfamily. D49 sub-subfamily. Ca(2+) serves as cofactor. In terms of tissue distribution, expressed by the venom gland.

It localises to the secreted. The catalysed reaction is a 1,2-diacyl-sn-glycero-3-phosphocholine + H2O = a 1-acyl-sn-glycero-3-phosphocholine + a fatty acid + H(+). Its function is as follows. PLA2 catalyzes the calcium-dependent hydrolysis of the 2-acyl groups in 3-sn-phosphoglycerides. The protein is Basic phospholipase A2 PL-X' of Protobothrops flavoviridis (Habu).